The primary structure comprises 327 residues: DNA-directed RNA polymerase subunit alpha (327 aa).

Positions 1-243 (MEKFLKYEIK…EHLNPIVNVN (243 aa)) are alpha N-terminal domain (alpha-NTD). Positions 260–327 (RVRSFAKQIE…VHELGLKLRS (68 aa)) are alpha C-terminal domain (alpha-CTD).

It belongs to the RNA polymerase alpha chain family. In terms of assembly, homodimer. The RNAP catalytic core consists of 2 alpha, 1 beta, 1 beta' and 1 omega subunit. When a sigma factor is associated with the core the holoenzyme is formed, which can initiate transcription.

It carries out the reaction RNA(n) + a ribonucleoside 5'-triphosphate = RNA(n+1) + diphosphate. Functionally, DNA-dependent RNA polymerase catalyzes the transcription of DNA into RNA using the four ribonucleoside triphosphates as substrates. In Mycoplasma pneumoniae (strain ATCC 29342 / M129 / Subtype 1) (Mycoplasmoides pneumoniae), this protein is DNA-directed RNA polymerase subunit alpha.